The primary structure comprises 357 residues: MKASIYDFTLKELSQLLKPSFRAKQLYLWLYAKYKTSFKDMQNNFSKDFIAYLEREFTLRTIEITHVRESVDGSKKYLFKSLRDNHTFEAVLLKMKDKKIDKETNAILEGEKYTVCVSCQIGCQVGCAFCFTQKGGFVRNLKASEIIQQALLIKEDNNLPIEKALNIVFMGMGEPLNNLDEVCKAIEIFNTGMQISPKRITISTSGVADKIPILAGKNLGVQLAISLHAVDDKTRSSLMPLNKKYNIECVLNEVKKWPLEQRKRVMFEYLLIKDLNDGLDCAKKLLKLLNGIKSKVNLILFNPHEGSKFERPSLESARMFADFLNSKGLLCTIRESKALDIEAACGQLREKKLSQQI.

E89 acts as the Proton acceptor in catalysis. Positions 109–340 (EGEKYTVCVS…CTIRESKALD (232 aa)) constitute a Radical SAM core domain. Residues C116 and C345 are joined by a disulfide bond. [4Fe-4S] cluster contacts are provided by C123, C127, and C130. S-adenosyl-L-methionine is bound by residues 173–174 (GE), S203, 226–228 (SLH), and N302. C345 acts as the S-methylcysteine intermediate in catalysis.

It belongs to the radical SAM superfamily. RlmN family. [4Fe-4S] cluster is required as a cofactor.

The protein resides in the cytoplasm. The catalysed reaction is adenosine(2503) in 23S rRNA + 2 reduced [2Fe-2S]-[ferredoxin] + 2 S-adenosyl-L-methionine = 2-methyladenosine(2503) in 23S rRNA + 5'-deoxyadenosine + L-methionine + 2 oxidized [2Fe-2S]-[ferredoxin] + S-adenosyl-L-homocysteine. It catalyses the reaction adenosine(37) in tRNA + 2 reduced [2Fe-2S]-[ferredoxin] + 2 S-adenosyl-L-methionine = 2-methyladenosine(37) in tRNA + 5'-deoxyadenosine + L-methionine + 2 oxidized [2Fe-2S]-[ferredoxin] + S-adenosyl-L-homocysteine. In terms of biological role, specifically methylates position 2 of adenine 2503 in 23S rRNA and position 2 of adenine 37 in tRNAs. m2A2503 modification seems to play a crucial role in the proofreading step occurring at the peptidyl transferase center and thus would serve to optimize ribosomal fidelity. The protein is Dual-specificity RNA methyltransferase RlmN of Helicobacter pylori (strain P12).